A 457-amino-acid chain; its full sequence is Zinc finger protein ZPR1 (457 aa).

Residues 1–13 (MSTVSDPNSSNPP) show a composition bias toward polar residues. The segment at 1-21 (MSTVSDPNSSNPPESAGNIRP) is disordered. C4-type zinc fingers lie at residues 43–75 (CMNC…CDHC) and 261–293 (CPSC…CGAC). The tract at residues 414 to 457 (VQSLSDDDSEPDDKLTVERYDRSYEDNEDLGLNDMKTEGYEEKA) is disordered. 2 stretches are compositionally biased toward basic and acidic residues: residues 425–438 (DDKL…RSYE) and 448–457 (MKTEGYEEKA).

Belongs to the ZPR1 family.

Its function is as follows. Might mediate EGFR and FGFR signal transduction cascades required for lumen formation in tracheal cells. The polypeptide is Zinc finger protein ZPR1 (Drosophila melanogaster (Fruit fly)).